The primary structure comprises 264 residues: Thymidylate synthase (264 aa).

R21 lines the dUMP pocket. H51 lines the (6R)-5,10-methylene-5,6,7,8-tetrahydrofolate pocket. Residue 126–127 coordinates dUMP; that stretch reads RR. C146 acts as the Nucleophile in catalysis. Residues 166-169, N177, and 207-209 each bind dUMP; these read RSAD and HLY. Position 169 (D169) interacts with (6R)-5,10-methylene-5,6,7,8-tetrahydrofolate. S263 lines the (6R)-5,10-methylene-5,6,7,8-tetrahydrofolate pocket.

This sequence belongs to the thymidylate synthase family. Bacterial-type ThyA subfamily. In terms of assembly, homodimer.

The protein localises to the cytoplasm. It catalyses the reaction dUMP + (6R)-5,10-methylene-5,6,7,8-tetrahydrofolate = 7,8-dihydrofolate + dTMP. It participates in pyrimidine metabolism; dTTP biosynthesis. In terms of biological role, catalyzes the reductive methylation of 2'-deoxyuridine-5'-monophosphate (dUMP) to 2'-deoxythymidine-5'-monophosphate (dTMP) while utilizing 5,10-methylenetetrahydrofolate (mTHF) as the methyl donor and reductant in the reaction, yielding dihydrofolate (DHF) as a by-product. This enzymatic reaction provides an intracellular de novo source of dTMP, an essential precursor for DNA biosynthesis. This chain is Thymidylate synthase, found in Nitrosococcus oceani (strain ATCC 19707 / BCRC 17464 / JCM 30415 / NCIMB 11848 / C-107).